The following is a 676-amino-acid chain: LIM domain-containing protein 1 (676 aa).

Residues 54-134 are mediates nuclear export; that stretch reads KIHLQQQQQQ…PPYPPQEQRS (81 aa). Disordered stretches follow at residues 104-163 and 189-389; these read KPPL…SAFH and KWGD…TSLV. Position 145 is a phosphoserine (serine 145). The interval 186–260 is interaction with EGLN1/PHD2; that stretch reads ASPKWGDKPG…IGGRSSEKPT (75 aa). Composition is skewed to low complexity over residues 201–213 and 232–242; these read GLSV…SSPG and LSLSSSRSSEG. 2 positions are modified to phosphoserine: serine 233 and serine 239. Positions 243–253 are enriched in gly residues; it reads SLGGQNSGIGG. A compositionally biased stretch (polar residues) spans 262–271; that stretch reads LWSTASSQRV. Phosphoserine is present on residues serine 272, serine 277, serine 304, and serine 316. The span at 343 to 360 shows a compositional bias: low complexity; the sequence is SYLSSSAPSSSPAGLDGS. Residues 404–442 are interaction with RB1; that stretch reads GPLGWSSDGSLGSVLLDSPSSPRVRLPCQPLVPGPELRP. Residues serine 421 and serine 424 each carry the phosphoserine modification. 3 consecutive LIM zinc-binding domains span residues 470–531, 535–595, and 595–664; these read GACV…SGFQ, DRCF…VLAP, and PKCA…RLEK. Residues 472 to 676 are necessary for nuclear localization; that stretch reads CVKCSKGVFG…SSTALHQHHF (205 aa).

It belongs to the zyxin/ajuba family. Interacts (via LIM domains) with TRAF6. Found in a complex with TRAF6, PRKCZ and SQSTM1. Interacts (via LIM domains) SNAI2/SLUG (via SNAG domain) and SCRT1 (via SNAG domain). Interacts with SQSTM1 and RB1. Found in a complex composed of LIMD1, VHL, EGLN1/PHD2, ELOB and CUL2. Interacts with EIF4E, AGO1, AGO2, DCP2, DDX6, LATS1, LATS2, EGLN1/PHD2, EGLN2/PHD1 and EGLN3/PHD3. Interacts (via LIM zinc-binding 2) with isoform 1 and isoform 3 of VHL. Interacts (via LIM domains) with SNAI1 (via SNAG domain). Phosphorylated during mitosis. Expressed in normal and breast cancer tissues (at protein level). Ubiquitous.

The protein resides in the cytoplasm. The protein localises to the nucleus. It is found in the P-body. It localises to the cell junction. Its subcellular location is the adherens junction. The protein resides in the focal adhesion. Adapter or scaffold protein which participates in the assembly of numerous protein complexes and is involved in several cellular processes such as cell fate determination, cytoskeletal organization, repression of gene transcription, cell-cell adhesion, cell differentiation, proliferation and migration. Positively regulates microRNA (miRNA)-mediated gene silencing and is essential for P-body formation and integrity. Acts as a hypoxic regulator by bridging an association between the prolyl hydroxylases and VHL enabling efficient degradation of HIF1A. Acts as a transcriptional corepressor for SNAI1- and SNAI2/SLUG-dependent repression of E-cadherin transcription. Negatively regulates the Hippo signaling pathway and antagonizes phosphorylation of YAP1. Inhibits E2F-mediated transcription, and suppresses the expression of the majority of genes with E2F1-responsive elements. Regulates osteoblast development, function, differentiation and stress osteoclastogenesis. Enhances the ability of TRAF6 to activate adapter protein complex 1 (AP-1) and negatively regulates the canonical Wnt receptor signaling pathway in osteoblasts. May act as a tumor suppressor by inhibiting cell proliferation. This chain is LIM domain-containing protein 1 (LIMD1), found in Homo sapiens (Human).